Consider the following 184-residue polypeptide: Peptidyl-tRNA hydrolase (184 aa).

Residue Y14 participates in tRNA binding. H19 functions as the Proton acceptor in the catalytic mechanism. TRNA-binding residues include F64, N66, and N112.

The protein belongs to the PTH family. As to quaternary structure, monomer.

Its subcellular location is the cytoplasm. The catalysed reaction is an N-acyl-L-alpha-aminoacyl-tRNA + H2O = an N-acyl-L-amino acid + a tRNA + H(+). In terms of biological role, hydrolyzes ribosome-free peptidyl-tRNAs (with 1 or more amino acids incorporated), which drop off the ribosome during protein synthesis, or as a result of ribosome stalling. Catalyzes the release of premature peptidyl moieties from peptidyl-tRNA molecules trapped in stalled 50S ribosomal subunits, and thus maintains levels of free tRNAs and 50S ribosomes. The chain is Peptidyl-tRNA hydrolase from Listeria innocua serovar 6a (strain ATCC BAA-680 / CLIP 11262).